The sequence spans 517 residues: MDPAGAADPSVPPNPLTHLSLQDRSEMQLQSEADRRSLPGTWTRSSPEHTTILRGGVRRCLQQQCEQTVRILHAKVAQKSYGNEKRFFCPPPCVYLSGPGWRVKPGQDQAHQAGETGPTVCGYMGLDSASGSATETQKLNFEQQPDSREFGCAKTLYISDADKRKHFRLVLRLVLRGGRELGTFHSRLIKVISKPSQKKQSLKNTDLCISSGSKVSLFNRLRSQTVSTRYLSVEDGAFVASARQWAAFTLHLADGHSAQGDFPPREGYVRYGSLVQLVCTVTGITLPPMIIRKVAKQCALLDVDEPISQLHKCAFQFPGSPPGGGGTYLCLATEKVVQFQASPCPKEANRALLNDSSCWTIIGTESVEFSFSTSLACTLEPVTPVPLISTLELSGGGDVATLELHGENFHAGLKVWFGDVEAETMYRSPRSLVCVVPDVAAFCSDWRWLRAPITIPMSLVRADGLFYPSAFSFTYTPEYSVRPGHPGVPEPATDADALLESIHQEFTRTNFHLFIQT.

Residues 26–37 show a composition bias toward basic and acidic residues; sequence EMQLQSEADRRS. The interval 26–48 is disordered; the sequence is EMQLQSEADRRSLPGTWTRSSPE. 3 DNA-binding regions span residues 78-88, 193-198, and 220-225; these read QKSYGNEKRFF, SKPSQK, and RLRSQT. Residues 387-512 form the IPT/TIG domain; it reads LISTLELSGG…HQEFTRTNFH (126 aa).

Belongs to the Su(H) family. As to quaternary structure, interacts weakly with EBNA2. Does not interact with any Notch proteins.

The protein resides in the nucleus. Its function is as follows. Putative transcription factor, which cooperates with EBNA2 to activate transcription. This chain is Recombining binding protein suppressor of hairless-like protein (RBPJL), found in Homo sapiens (Human).